A 527-amino-acid polypeptide reads, in one-letter code: Beta-glucosidase 19 (527 aa).

Positions 1-21 (MKIPLLGLLLLISLVGSPTRA) are cleaved as a signal peptide. A beta-D-glucoside contacts are provided by glutamine 52 and histidine 155. A glycan (N-linked (GlcNAc...) asparagine) is linked at asparagine 183. An a beta-D-glucoside-binding site is contributed by 200–201 (NE). Glutamate 201 (proton donor) is an active-site residue. A disulfide bridge connects residues cysteine 220 and cysteine 231. Positions 345 and 418 each coordinate a beta-D-glucoside. Catalysis depends on glutamate 418, which acts as the Nucleophile. N-linked (GlcNAc...) asparagine glycosylation is present at asparagine 462. A beta-D-glucoside contacts are provided by residues tryptophan 469, 476–477 (EW), and phenylalanine 485. N-linked (GlcNAc...) asparagine glycosylation is present at asparagine 495. A Prevents secretion from ER motif is present at residues 524-527 (HEEL).

This sequence belongs to the glycosyl hydrolase 1 family.

The protein resides in the endoplasmic reticulum lumen. The catalysed reaction is Hydrolysis of terminal, non-reducing beta-D-glucosyl residues with release of beta-D-glucose.. The protein is Beta-glucosidase 19 of Arabidopsis thaliana (Mouse-ear cress).